The following is a 179-amino-acid chain: Large ribosomal subunit protein uL5 (179 aa).

This sequence belongs to the universal ribosomal protein uL5 family. As to quaternary structure, part of the 50S ribosomal subunit; part of the 5S rRNA/L5/L18/L25 subcomplex. Contacts the 5S rRNA and the P site tRNA. Forms a bridge to the 30S subunit in the 70S ribosome.

This is one of the proteins that bind and probably mediate the attachment of the 5S RNA into the large ribosomal subunit, where it forms part of the central protuberance. In the 70S ribosome it contacts protein S13 of the 30S subunit (bridge B1b), connecting the 2 subunits; this bridge is implicated in subunit movement. Contacts the P site tRNA; the 5S rRNA and some of its associated proteins might help stabilize positioning of ribosome-bound tRNAs. This is Large ribosomal subunit protein uL5 from Shewanella oneidensis (strain ATCC 700550 / JCM 31522 / CIP 106686 / LMG 19005 / NCIMB 14063 / MR-1).